The sequence spans 122 residues: Large ribosomal subunit protein uL14 (122 aa).

It belongs to the universal ribosomal protein uL14 family. Part of the 50S ribosomal subunit. Forms a cluster with proteins L3 and L19. In the 70S ribosome, L14 and L19 interact and together make contacts with the 16S rRNA in bridges B5 and B8.

In terms of biological role, binds to 23S rRNA. Forms part of two intersubunit bridges in the 70S ribosome. The protein is Large ribosomal subunit protein uL14 of Thermomicrobium roseum (strain ATCC 27502 / DSM 5159 / P-2).